Consider the following 60-residue polypeptide: Mastoparan (60 aa).

The signal sequence occupies residues 1–27; it reads MKDTILILFTAFIALLGFFGMSAEALA. 4 AXPX repeats span residues 27–30, 31–34, 35–38, and 41–44; these read ADPL, ADPS, AGPN, and ADPE. Positions 28–45 are excised as a propeptide; that stretch reads DPLADPSAGPNAEADPEA. The residue at position 59 (leucine 59) is a Leucine amide.

Belongs to the MCD family. Mastoparan subfamily. In terms of tissue distribution, expressed by the venom gland.

Its subcellular location is the secreted. It localises to the target cell membrane. In terms of biological role, mast cell degranulating peptide. Its mast cell degranulation activity may be related to the activation of G-protein coupled receptors in mast cells as well as interaction with other proteins located in cell endosomal membranes in the mast cells. Has a membranolytic activity on human glioblastoma multiforme cells (brain tumor cells) that leads to cell necrosis. In Vespa orientalis (Oriental hornet), this protein is Mastoparan.